Here is a 566-residue protein sequence, read N- to C-terminus: Arginine--tRNA ligase (566 aa).

The short motif at 123 to 133 (PNVAKPFHVGH) is the 'HIGH' region element.

The protein belongs to the class-I aminoacyl-tRNA synthetase family. As to quaternary structure, monomer.

Its subcellular location is the cytoplasm. The catalysed reaction is tRNA(Arg) + L-arginine + ATP = L-arginyl-tRNA(Arg) + AMP + diphosphate. This chain is Arginine--tRNA ligase, found in Alkaliphilus metalliredigens (strain QYMF).